The chain runs to 158 residues: NADH-quinone oxidoreductase subunit B 1 (158 aa).

Cysteine 37, cysteine 38, cysteine 102, and cysteine 132 together coordinate [4Fe-4S] cluster.

It belongs to the complex I 20 kDa subunit family. In terms of assembly, NDH-1 is composed of 14 different subunits. Subunits NuoB, C, D, E, F, and G constitute the peripheral sector of the complex. It depends on [4Fe-4S] cluster as a cofactor.

Its subcellular location is the cell inner membrane. It carries out the reaction a quinone + NADH + 5 H(+)(in) = a quinol + NAD(+) + 4 H(+)(out). In terms of biological role, NDH-1 shuttles electrons from NADH, via FMN and iron-sulfur (Fe-S) centers, to quinones in the respiratory chain. Couples the redox reaction to proton translocation (for every two electrons transferred, four hydrogen ions are translocated across the cytoplasmic membrane), and thus conserves the redox energy in a proton gradient. The chain is NADH-quinone oxidoreductase subunit B 1 from Azoarcus sp. (strain BH72).